Reading from the N-terminus, the 1792-residue chain is D-lysergyl-peptide-synthetase subunit 3 (1792 aa).

Positions 239 to 642 are adenylation (A) domain; sequence FRQRCDLHPN…GRKDSQIKIR (404 aa). The 75-residue stretch at 779 to 853 folds into the Carrier domain; it reads SNEEHRLQRM…DLARKASQSV (75 aa). S813 carries the O-(pantetheine 4'-phosphoryl)serine modification. The tract at residues 895-1285 is condensation (C) domain; that stretch reads EDIYPCTPMQ…HILGQIHGKE (391 aa). Residues 1415–1640 form a reductase (R) domain region; sequence VTGANGFIGT…AGEFNSSAGS (226 aa).

This sequence belongs to the NRP synthetase family.

It participates in alkaloid biosynthesis; ergot alkaloid biosynthesis. In terms of biological role, D-lysergyl-peptide-synthetase subunit 3; part of the gene cluster that mediates the biosynthesis of fungal ergot alkaloid. DmaW catalyzes the first step of ergot alkaloid biosynthesis by condensing dimethylallyl diphosphate (DMAP) and tryptophan to form 4-dimethylallyl-L-tryptophan. The second step is catalyzed by the methyltransferase easF that methylates 4-dimethylallyl-L-tryptophan in the presence of S-adenosyl-L-methionine, resulting in the formation of 4-dimethylallyl-L-abrine. The catalase easC and the FAD-dependent oxidoreductase easE then transform 4-dimethylallyl-L-abrine to chanoclavine-I which is further oxidized by easD in the presence of NAD(+), resulting in the formation of chanoclavine-I aldehyde. Agroclavine dehydrogenase easG then mediates the conversion of chanoclavine-I aldehyde to agroclavine via a non-enzymatic adduct reaction: the substrate is an iminium intermediate that is formed spontaneously from chanoclavine-I aldehyde in the presence of glutathione. The presence of easA is not required to complete this reaction. Further conversion of agroclavine to paspalic acid is a two-step process involving oxidation of agroclavine to elymoclavine and of elymoclavine to paspalic acid, the second step being performed by the elymoclavine oxidase cloA. Paspalic acid is then further converted to D-lysergic acid. Ergopeptines are assembled from D-lysergic acid and three different amino acids by the D-lysergyl-peptide-synthetases composed each of a monomudular and a trimodular nonribosomal peptide synthetase subunit. LpsB and lpsC encode the monomodular subunits responsible for D-lysergic acid activation and incorporation into the ergopeptine backbone. LpsA1 and A2 subunits encode the trimodular nonribosomal peptide synthetase assembling the tripeptide portion of ergopeptines. LpsA1 is responsible for formation of the major ergopeptine, ergotamine, and lpsA2 for alpha-ergocryptine, the minor ergopeptine of the total alkaloid mixture elaborated by C.purpurea. D-lysergyl-tripeptides are assembled by the nonribosomal peptide synthetases and released as N-(D-lysergyl-aminoacyl)-lactams. Cyclolization of the D-lysergyl-tripeptides is performed by the Fe(2+)/2-ketoglutarate-dependent dioxygenase easH which introduces a hydroxyl group into N-(D-lysergyl-aminoacyl)-lactam at alpha-C of the aminoacyl residue followed by spontaneous condensation with the terminal lactam carbonyl group. The protein is D-lysergyl-peptide-synthetase subunit 3 of Claviceps purpurea (strain 20.1) (Ergot fungus).